The following is a 258-amino-acid chain: Imidazole glycerol phosphate synthase subunit HisF (258 aa).

Residues Asp12 and Asp131 contribute to the active site.

It belongs to the HisA/HisF family. In terms of assembly, heterodimer of HisH and HisF.

It is found in the cytoplasm. It carries out the reaction 5-[(5-phospho-1-deoxy-D-ribulos-1-ylimino)methylamino]-1-(5-phospho-beta-D-ribosyl)imidazole-4-carboxamide + L-glutamine = D-erythro-1-(imidazol-4-yl)glycerol 3-phosphate + 5-amino-1-(5-phospho-beta-D-ribosyl)imidazole-4-carboxamide + L-glutamate + H(+). It functions in the pathway amino-acid biosynthesis; L-histidine biosynthesis; L-histidine from 5-phospho-alpha-D-ribose 1-diphosphate: step 5/9. IGPS catalyzes the conversion of PRFAR and glutamine to IGP, AICAR and glutamate. The HisF subunit catalyzes the cyclization activity that produces IGP and AICAR from PRFAR using the ammonia provided by the HisH subunit. This is Imidazole glycerol phosphate synthase subunit HisF from Nocardioides sp. (strain ATCC BAA-499 / JS614).